Reading from the N-terminus, the 237-residue chain is Probable septum site-determining protein MinC (237 aa).

This sequence belongs to the MinC family. Interacts with MinD and FtsZ.

Cell division inhibitor that blocks the formation of polar Z ring septums. Rapidly oscillates between the poles of the cell to destabilize FtsZ filaments that have formed before they mature into polar Z rings. Prevents FtsZ polymerization. This Buchnera aphidicola subsp. Acyrthosiphon pisum (strain 5A) protein is Probable septum site-determining protein MinC.